A 121-amino-acid chain; its full sequence is Putative membrane protein insertion efficiency factor (121 aa).

This sequence belongs to the UPF0161 family.

The protein resides in the cell inner membrane. Its function is as follows. Could be involved in insertion of integral membrane proteins into the membrane. This is Putative membrane protein insertion efficiency factor from Rhodopseudomonas palustris (strain HaA2).